A 648-amino-acid polypeptide reads, in one-letter code: Phosphomethylpyrimidine synthase (648 aa).

Residues asparagine 253, methionine 282, tyrosine 311, histidine 347, 367-369 (SRG), 408-411 (DGLR), and glutamate 447 contribute to the substrate site. Histidine 451 contacts Zn(2+). Tyrosine 474 is a substrate binding site. Residue histidine 515 participates in Zn(2+) binding. Residues cysteine 595, cysteine 598, and cysteine 603 each coordinate [4Fe-4S] cluster.

The protein belongs to the ThiC family. Homodimer. [4Fe-4S] cluster is required as a cofactor.

It carries out the reaction 5-amino-1-(5-phospho-beta-D-ribosyl)imidazole + S-adenosyl-L-methionine = 4-amino-2-methyl-5-(phosphooxymethyl)pyrimidine + CO + 5'-deoxyadenosine + formate + L-methionine + 3 H(+). Its pathway is cofactor biosynthesis; thiamine diphosphate biosynthesis. Its function is as follows. Catalyzes the synthesis of the hydroxymethylpyrimidine phosphate (HMP-P) moiety of thiamine from aminoimidazole ribotide (AIR) in a radical S-adenosyl-L-methionine (SAM)-dependent reaction. This Burkholderia thailandensis (strain ATCC 700388 / DSM 13276 / CCUG 48851 / CIP 106301 / E264) protein is Phosphomethylpyrimidine synthase.